The chain runs to 267 residues: Energy-coupling factor transporter transmembrane protein EcfT (267 aa).

5 helical membrane-spanning segments follow: residues Ile26 to Leu46, Ile73 to Ile93, Leu116 to Thr136, Val151 to Leu171, and Leu247 to Phe267.

This sequence belongs to the energy-coupling factor EcfT family. As to quaternary structure, forms a stable energy-coupling factor (ECF) transporter complex composed of 2 membrane-embedded substrate-binding proteins (S component), 2 ATP-binding proteins (A component) and 2 transmembrane proteins (T component). May be able to interact with more than 1 S component at a time.

The protein resides in the cell membrane. Functionally, transmembrane (T) component of an energy-coupling factor (ECF) ABC-transporter complex. Unlike classic ABC transporters this ECF transporter provides the energy necessary to transport a number of different substrates. In Ruminiclostridium cellulolyticum (strain ATCC 35319 / DSM 5812 / JCM 6584 / H10) (Clostridium cellulolyticum), this protein is Energy-coupling factor transporter transmembrane protein EcfT.